Here is a 179-residue protein sequence, read N- to C-terminus: MIP18 family protein C144.16 (179 aa).

Residues 1 to 26 (MSANLQNENPEVKELNQLPSRVEEEE) form a disordered region.

Belongs to the MIP18 family.

In terms of biological role, may play a role in chromosome segregation through establishment of sister chromatid cohesion. The polypeptide is MIP18 family protein C144.16 (Schizosaccharomyces pombe (strain 972 / ATCC 24843) (Fission yeast)).